We begin with the raw amino-acid sequence, 374 residues long: uncharacterized protein (374 aa).

Positions 1 to 13 (METKYHEYDDVQT) are enriched in basic and acidic residues. Disordered stretches follow at residues 1-20 (METK…PSNK), 91-193 (SPMT…PLNQ), and 236-374 (KINN…SDFE). Over residues 95–155 (NNNNNNNNNN…NNSSNNNNNN (61 aa)) the composition is skewed to low complexity. Polar residues predominate over residues 166–193 (ISSNQSSPLSIYSTPPNPSSYVSSPLNQ). Over residues 242 to 262 (APPPPPKACAPPPPPPPPPPI) the composition is skewed to pro residues. A compositionally biased stretch (low complexity) spans 277–300 (NNNNNNNNNNNSSNTNDSNNTNNT).

This is an uncharacterized protein from Dictyostelium discoideum (Social amoeba).